Here is a 321-residue protein sequence, read N- to C-terminus: D-alanine--D-alanine ligase (321 aa).

An ATP-grasp domain is found at 121 to 315; that stretch reads RSWFLTNNIN…FVNLIEEILK (195 aa). An ATP-binding site is contributed by 148 to 199; it reads IKRPYVIKPFTQGSSIGVEVIFEEDDFNFANYDFPYGDEVIIEKYIKGRELQ. Mg(2+)-binding residues include Glu-268, Glu-282, and Asn-284.

It belongs to the D-alanine--D-alanine ligase family. Requires Mg(2+) as cofactor. It depends on Mn(2+) as a cofactor.

The protein resides in the cytoplasm. It carries out the reaction 2 D-alanine + ATP = D-alanyl-D-alanine + ADP + phosphate + H(+). It functions in the pathway cell wall biogenesis; peptidoglycan biosynthesis. Functionally, cell wall formation. This Rickettsia bellii (strain OSU 85-389) protein is D-alanine--D-alanine ligase.